The following is a 346-amino-acid chain: Uroporphyrinogen decarboxylase (346 aa).

Substrate contacts are provided by residues 23-27 (RQAGR), Asp-73, Tyr-151, Ser-206, and His-321.

This sequence belongs to the uroporphyrinogen decarboxylase family. As to quaternary structure, homodimer.

The protein localises to the cytoplasm. The enzyme catalyses uroporphyrinogen III + 4 H(+) = coproporphyrinogen III + 4 CO2. The protein operates within porphyrin-containing compound metabolism; protoporphyrin-IX biosynthesis; coproporphyrinogen-III from 5-aminolevulinate: step 4/4. Catalyzes the decarboxylation of four acetate groups of uroporphyrinogen-III to yield coproporphyrinogen-III. This Sulfurovum sp. (strain NBC37-1) protein is Uroporphyrinogen decarboxylase.